The following is a 138-amino-acid chain: Lutropin subunit beta (138 aa).

Positions leucine 1 to alanine 17 are cleaved as a signal peptide. Disulfide bonds link cysteine 26-cysteine 74, cysteine 40-cysteine 89, cysteine 43-cysteine 127, cysteine 51-cysteine 105, cysteine 55-cysteine 107, and cysteine 110-cysteine 117. An N-linked (GlcNAc...) asparagine glycan is attached at asparagine 30.

Belongs to the glycoprotein hormones subunit beta family. In terms of assembly, heterodimer of a common alpha chain and a unique beta chain which confers biological specificity to thyrotropin, lutropin, follitropin and gonadotropin.

The protein resides in the secreted. In terms of biological role, promotes spermatogenesis and ovulation by stimulating the testes and ovaries to synthesize steroids. The polypeptide is Lutropin subunit beta (LHB) (Canis lupus familiaris (Dog)).